The sequence spans 161 residues: Globin CTT-VIIB-5/CTT-VIIB-9 (161 aa).

An N-terminal signal peptide occupies residues 1-16; it reads MKFFAVLALCIVGAIA. Positions 18–161 constitute a Globin domain; it reads PLTADEASLV…NTFAIVVPRL (144 aa). Residues H76 and H111 each contribute to the heme b site.

It belongs to the globin family. As to quaternary structure, homodimer.

This Chironomus thummi thummi (Midge) protein is Globin CTT-VIIB-5/CTT-VIIB-9 (CTT-7B5).